The chain runs to 254 residues: 5'-nucleotidase SurE (254 aa).

Residues Asp8, Asp9, Ser40, and Asn93 each contribute to the a divalent metal cation site.

It belongs to the SurE nucleotidase family. Requires a divalent metal cation as cofactor.

Its subcellular location is the cytoplasm. It catalyses the reaction a ribonucleoside 5'-phosphate + H2O = a ribonucleoside + phosphate. Nucleotidase that shows phosphatase activity on nucleoside 5'-monophosphates. This Rhizorhabdus wittichii (strain DSM 6014 / CCUG 31198 / JCM 15750 / NBRC 105917 / EY 4224 / RW1) (Sphingomonas wittichii) protein is 5'-nucleotidase SurE.